The sequence spans 238 residues: Orotidine 5'-phosphate decarboxylase (238 aa).

Substrate is bound by residues Asp10, Lys32, 59-68 (DLKLHDIPNT), Thr122, Arg184, Gln193, Gly213, and Arg214. Lys61 serves as the catalytic Proton donor.

This sequence belongs to the OMP decarboxylase family. Type 1 subfamily. As to quaternary structure, homodimer.

The catalysed reaction is orotidine 5'-phosphate + H(+) = UMP + CO2. Its pathway is pyrimidine metabolism; UMP biosynthesis via de novo pathway; UMP from orotate: step 2/2. Functionally, catalyzes the decarboxylation of orotidine 5'-monophosphate (OMP) to uridine 5'-monophosphate (UMP). The polypeptide is Orotidine 5'-phosphate decarboxylase (Bacillus cereus (strain AH187)).